We begin with the raw amino-acid sequence, 141 residues long: Large ribosomal subunit protein uL11 (141 aa).

This sequence belongs to the universal ribosomal protein uL11 family. Part of the ribosomal stalk of the 50S ribosomal subunit. Interacts with L10 and the large rRNA to form the base of the stalk. L10 forms an elongated spine to which L12 dimers bind in a sequential fashion forming a multimeric L10(L12)X complex. Post-translationally, one or more lysine residues are methylated.

In terms of biological role, forms part of the ribosomal stalk which helps the ribosome interact with GTP-bound translation factors. The protein is Large ribosomal subunit protein uL11 of Agathobacter rectalis (strain ATCC 33656 / DSM 3377 / JCM 17463 / KCTC 5835 / VPI 0990) (Eubacterium rectale).